The chain runs to 101 residues: Ubiquitin-related modifier 1 homolog (101 aa).

A 1-thioglycine modification is found at Gly101. Residue Gly101 forms a Glycyl lysine isopeptide (Gly-Lys) (interchain with K-? in acceptor proteins) linkage.

It belongs to the URM1 family. In terms of assembly, interacts with cer. Post-translationally, C-terminal thiocarboxylation occurs in 2 steps, it is first acyl-adenylated (-COAMP) via the hesA/moeB/thiF part of the MOCS3 homolog, then thiocarboxylated (-COSH) via the rhodanese domain of the MOCS3 homolog.

Its subcellular location is the cytoplasm. The protein operates within tRNA modification; 5-methoxycarbonylmethyl-2-thiouridine-tRNA biosynthesis. In terms of biological role, acts as a sulfur carrier required for 2-thiolation of mcm(5)S(2)U at tRNA wobble positions of cytosolic tRNA(Lys), tRNA(Glu) and tRNA(Gln). Serves as sulfur donor in tRNA 2-thiolation reaction by being thiocarboxylated (-COSH) at its C-terminus by MOCS3. The sulfur is then transferred to tRNA to form 2-thiolation of mcm(5)S(2)U. Also acts as a ubiquitin-like protein (UBL) that is covalently conjugated via an isopeptide bond to lysine residues of target proteins such as Prx2/Jafrac1, Ciao1, Eip71CD and GILT1. The thiocarboxylated form serves as substrate for conjugation and oxidative stress specifically induces the formation of UBL-protein conjugates. This Drosophila erecta (Fruit fly) protein is Ubiquitin-related modifier 1 homolog.